The following is a 369-amino-acid chain: Glutamate 5-kinase (369 aa).

K9 lines the ATP pocket. Residues S49, D136, and N148 each coordinate substrate. ATP contacts are provided by residues 168–169 and 210–216; these read TD and TGGMLTK. The region spanning 275 to 355 is the PUA domain; it reads QGEIYVDQGA…KGVVIHRDDW (81 aa).

It belongs to the glutamate 5-kinase family.

Its subcellular location is the cytoplasm. It catalyses the reaction L-glutamate + ATP = L-glutamyl 5-phosphate + ADP. Its pathway is amino-acid biosynthesis; L-proline biosynthesis; L-glutamate 5-semialdehyde from L-glutamate: step 1/2. Catalyzes the transfer of a phosphate group to glutamate to form L-glutamate 5-phosphate. The polypeptide is Glutamate 5-kinase (Streptococcus sanguinis (strain SK36)).